We begin with the raw amino-acid sequence, 231 residues long: MHLITALVLLLQLIHFITSSPIPQEVVGGPGPVVGGSGIGNVWEKANEQAAEQQNIGGPGPVISGSGIGDVWNKANEPAEQQENIGGPGPVVSGSGIGNVWEKANEQAAHQQSIEGPGPVVSGSGIGNVWEKANEQAAHQQSIEGPGPVVSGSGIGDVWNKANEQAAEQQNIGGPGPVISGSGIGNVWEKANEQAAEQQNIGVGGPGPVKSGSGIGNVWEETNEEAASMQA.

The first 19 residues, 1-19 (MHLITALVLLLQLIHFITS), serve as a signal peptide directing secretion. Repeat copies occupy residues 28-56 (GGPG…QQNI), 57-85 (GGPG…QENI), 86-114 (GGPG…QQSI), 115-143 (EGPG…QQSI), 144-172 (EGPG…QQNI), 173-201 (GGPG…QQNI), and 204-231 (GGPG…SMQA). The segment at 28–201 (GGPGPVVGGS…NEQAAEQQNI (174 aa)) is 6 X 29 AA tandem repeats of [EG]-G-P-G-P-V-[IV]-[SG]-G-S-G-I-G-[ND]-V-W-[NE]-K-A-N-E-[QP]-A-[AE]-[QEH]-Q-[EQ]-[NS]-I. Disordered regions lie at residues 107 to 126 (QAAH…GSGI) and 134 to 231 (NEQA…SMQA). 3 stretches are compositionally biased toward low complexity: residues 114–123 (IEGPGPVVSG), 143–152 (IEGPGPVVSG), and 177–187 (PVISGSGIGNV).

This chain is Allergen Ani s 10, found in Anisakis simplex (Herring worm).